The sequence spans 107 residues: MKRCRSEHVPSRLPRKKCKNHLDMRSFLSLFASKKSNAHDASSIVLNEKVNFVTDNDHLPSSTGVCEFCDNVLYLSTCDRCQRNICRNCSTLMYFKENTVARCLDCL.

This is an uncharacterized protein from Schizosaccharomyces pombe (strain 972 / ATCC 24843) (Fission yeast).